A 461-amino-acid chain; its full sequence is Bifunctional protein HldE (461 aa).

Positions 1-312 (MLEFLSQQKP…IKSFNRVDFE (312 aa)) are ribokinase. 191–194 (NKKE) contacts ATP. The active site involves D259. Residues 334-461 (FTNGCFDIVH…KIIEKIKDKK (128 aa)) form a cytidylyltransferase region.

This sequence in the N-terminal section; belongs to the carbohydrate kinase PfkB family. It in the C-terminal section; belongs to the cytidylyltransferase family. In terms of assembly, homodimer.

It catalyses the reaction D-glycero-beta-D-manno-heptose 7-phosphate + ATP = D-glycero-beta-D-manno-heptose 1,7-bisphosphate + ADP + H(+). The catalysed reaction is D-glycero-beta-D-manno-heptose 1-phosphate + ATP + H(+) = ADP-D-glycero-beta-D-manno-heptose + diphosphate. Its pathway is nucleotide-sugar biosynthesis; ADP-L-glycero-beta-D-manno-heptose biosynthesis; ADP-L-glycero-beta-D-manno-heptose from D-glycero-beta-D-manno-heptose 7-phosphate: step 1/4. The protein operates within nucleotide-sugar biosynthesis; ADP-L-glycero-beta-D-manno-heptose biosynthesis; ADP-L-glycero-beta-D-manno-heptose from D-glycero-beta-D-manno-heptose 7-phosphate: step 3/4. Catalyzes the phosphorylation of D-glycero-D-manno-heptose 7-phosphate at the C-1 position to selectively form D-glycero-beta-D-manno-heptose-1,7-bisphosphate. In terms of biological role, catalyzes the ADP transfer from ATP to D-glycero-beta-D-manno-heptose 1-phosphate, yielding ADP-D-glycero-beta-D-manno-heptose. This Campylobacter jejuni subsp. jejuni serotype O:6 (strain 81116 / NCTC 11828) protein is Bifunctional protein HldE.